The chain runs to 177 residues: Large ribosomal subunit protein uL6 (177 aa).

The tract at residues 154-177 (PEPYKGKGVRYADEQVRRKEAKKK) is disordered. Residues 155-171 (EPYKGKGVRYADEQVRR) show a composition bias toward basic and acidic residues.

The protein belongs to the universal ribosomal protein uL6 family. In terms of assembly, part of the 50S ribosomal subunit.

Its function is as follows. This protein binds to the 23S rRNA, and is important in its secondary structure. It is located near the subunit interface in the base of the L7/L12 stalk, and near the tRNA binding site of the peptidyltransferase center. The chain is Large ribosomal subunit protein uL6 from Alcanivorax borkumensis (strain ATCC 700651 / DSM 11573 / NCIMB 13689 / SK2).